A 217-amino-acid polypeptide reads, in one-letter code: 7-cyano-7-deazaguanine synthase (217 aa).

Leu-7–Leu-17 provides a ligand contact to ATP. Positions 183, 191, 194, and 197 each coordinate Zn(2+).

This sequence belongs to the QueC family. The cofactor is Zn(2+).

The enzyme catalyses 7-carboxy-7-deazaguanine + NH4(+) + ATP = 7-cyano-7-deazaguanine + ADP + phosphate + H2O + H(+). It functions in the pathway purine metabolism; 7-cyano-7-deazaguanine biosynthesis. Functionally, catalyzes the ATP-dependent conversion of 7-carboxy-7-deazaguanine (CDG) to 7-cyano-7-deazaguanine (preQ(0)). The protein is 7-cyano-7-deazaguanine synthase of Methanoregula boonei (strain DSM 21154 / JCM 14090 / 6A8).